We begin with the raw amino-acid sequence, 481 residues long: MSKPIRVRYAPSPTGLLHIGNARTALFNYLYARRHGGTFIIRIEDTDRKRHVEDGERSQLENLKWLGMDWDESPETHENYRQSERLALYQQYIDQLLAEGKAYKSYVTEEELAAERERQEAAGETPRYINEFIGMSADEKAKYIAEREAAGIVPTVRLAVNESGIYKWTDMVKGDIEFEGGNIGGDWVIQKKDGYPTYNFAVVVDDHDMQISHVIRGDDHIANTPKQLMVYEALGWEAPEFGHMTLIINSETGKKLSKRDTNTLQFIEDYRKKGYMPEAVFNFIALLGWNPGGEEEIFSREQLIALFDENRLSKSPAAFDQKKMDWMSNEYLKHADFETVYALCKPFLEEAGRLTEKAEKLVELYKPQLKSADEIIPLTDLFFSDFPELTEAEKEVMAGETVSTVLQAFKAKLEAMSDEDFKPENIFPQIKAVQKETGIKGKNLFMPIRIAVSGEMHGPELPNTIYLLGRDKSIEHIKNML.

Positions 11–21 (PSPTGLLHIGN) match the 'HIGH' region motif. Positions 255–259 (KLSKR) match the 'KMSKS' region motif. ATP is bound at residue Lys-258.

Belongs to the class-I aminoacyl-tRNA synthetase family. Glutamate--tRNA ligase type 1 subfamily. Monomer.

It is found in the cytoplasm. The catalysed reaction is tRNA(Glu) + L-glutamate + ATP = L-glutamyl-tRNA(Glu) + AMP + diphosphate. Its function is as follows. Catalyzes the attachment of glutamate to tRNA(Glu) in a two-step reaction: glutamate is first activated by ATP to form Glu-AMP and then transferred to the acceptor end of tRNA(Glu). This chain is Glutamate--tRNA ligase, found in Streptococcus pyogenes serotype M6 (strain ATCC BAA-946 / MGAS10394).